The primary structure comprises 426 residues: MNENLLMIIGSQFGDEGKGKFVDLLSNQFDYIVRYQGGDNAGHTIVFDNKTFKLRLIPSGIFNPRNRVVIANGVVLNPITLLEEVKYLKSNGVSTDNLYVSDKCHVIFNFHIEMDKMLEELKGSKKIGTTNKGIGPCYTDKVSRVGIRVCDLFDFNVLLAKIQDNLQIKNVLFSRYGKQIFNPYTIAKQYYELGQQIKPFVINTVALLNYAYERNNKILFEGAQGIMLDIDYGTYPYVTSSNVIGLVSSGTGLAINKIKRILGVVKAYSTRVGSGPFVSEIEEENLAHYIREKGHEYGTVTKRPRRIGWLDLFLLKYVVTVSGISEIAITLIDVLSKVQKIKVCIGYKRNDKQLNYMPSSIEELQKCEPIYEILDGWSEDVSRIKSYDDLPLNLKRYISYIENFLKVRVRFVSVGPDRNQTIIKDN.

GTP-binding positions include 14 to 20 (GDEGKGK) and 42 to 44 (GHT). Aspartate 15 serves as the catalytic Proton acceptor. Mg(2+) is bound by residues aspartate 15 and glycine 42. IMP contacts are provided by residues 15-18 (DEGK), 40-43 (NAGH), threonine 130, arginine 144, glutamine 224, threonine 239, and arginine 303. Histidine 43 serves as the catalytic Proton donor. 299 to 305 (TVTKRPR) lines the substrate pocket. Residues arginine 305, 331–333 (LID), and 413–415 (SVG) each bind GTP.

It belongs to the adenylosuccinate synthetase family. As to quaternary structure, homodimer. Mg(2+) serves as cofactor.

It localises to the cytoplasm. It catalyses the reaction IMP + L-aspartate + GTP = N(6)-(1,2-dicarboxyethyl)-AMP + GDP + phosphate + 2 H(+). Its pathway is purine metabolism; AMP biosynthesis via de novo pathway; AMP from IMP: step 1/2. Its function is as follows. Plays an important role in the de novo pathway of purine nucleotide biosynthesis. Catalyzes the first committed step in the biosynthesis of AMP from IMP. The sequence is that of Adenylosuccinate synthetase from Malacoplasma penetrans (strain HF-2) (Mycoplasma penetrans).